Consider the following 165-residue polypeptide: Putative inactive neutral ceramidase B (165 aa).

The protein belongs to the neutral ceramidase family. As to expression, ubiquitous. Expression is reduced with increasing age and in late-onset Alzheimer disease (LOAD) patients. This reduction is even more pronounced in patients with an affected mother.

The polypeptide is Putative inactive neutral ceramidase B (Homo sapiens (Human)).